The chain runs to 230 residues: Cytidylate kinase (230 aa).

ATP is bound at residue 12–20 (GPSGAGKGT).

It belongs to the cytidylate kinase family. Type 1 subfamily.

The protein localises to the cytoplasm. The enzyme catalyses CMP + ATP = CDP + ADP. It carries out the reaction dCMP + ATP = dCDP + ADP. The chain is Cytidylate kinase from Shewanella sp. (strain W3-18-1).